The primary structure comprises 366 residues: Beta sliding clamp (366 aa).

The interval 1-125 (MKFTVEREHL…FPNLDDWQSE (125 aa)) is i. The II stretch occupies residues 126 to 253 (VEFTLPQATM…YRRVLPKNPD (128 aa)). The tract at residues 254–366 (KHLEAGCDLL…AAYVVMPMRL (113 aa)) is III.

This sequence belongs to the beta sliding clamp family. As to quaternary structure, forms a ring-shaped head-to-tail homodimer around DNA which binds and tethers DNA polymerases and other proteins to the DNA. The DNA replisome complex has a single clamp-loading complex (3 tau and 1 each of delta, delta', psi and chi subunits) which binds 3 Pol III cores (1 core on the leading strand and 2 on the lagging strand) each with a beta sliding clamp dimer. Additional proteins in the replisome are other copies of gamma, psi and chi, Ssb, DNA helicase and RNA primase.

It is found in the cytoplasm. In terms of biological role, confers DNA tethering and processivity to DNA polymerases and other proteins. Acts as a clamp, forming a ring around DNA (a reaction catalyzed by the clamp-loading complex) which diffuses in an ATP-independent manner freely and bidirectionally along dsDNA. Initially characterized for its ability to contact the catalytic subunit of DNA polymerase III (Pol III), a complex, multichain enzyme responsible for most of the replicative synthesis in bacteria; Pol III exhibits 3'-5' exonuclease proofreading activity. The beta chain is required for initiation of replication as well as for processivity of DNA replication. The chain is Beta sliding clamp (dnaN) from Escherichia coli O157:H7.